Reading from the N-terminus, the 300-residue chain is uncharacterized protein (300 aa).

A divalent metal cation contacts are provided by glutamate 146, glutamate 148, and aspartate 177.

The protein belongs to the FAH family.

This is an uncharacterized protein from Staphylococcus aureus (strain MW2).